Here is a 632-residue protein sequence, read N- to C-terminus: 1-deoxy-D-xylulose-5-phosphate synthase (632 aa).

Thiamine diphosphate contacts are provided by residues His-72 and 113 to 115; that span reads GHA. Asp-144 serves as a coordination point for Mg(2+). Residues 145 to 146, Asn-174, Tyr-285, and Glu-368 each bind thiamine diphosphate; that span reads GA. Asn-174 lines the Mg(2+) pocket.

This sequence belongs to the transketolase family. DXPS subfamily. Homodimer. Mg(2+) is required as a cofactor. Thiamine diphosphate serves as cofactor.

The enzyme catalyses D-glyceraldehyde 3-phosphate + pyruvate + H(+) = 1-deoxy-D-xylulose 5-phosphate + CO2. It participates in metabolic intermediate biosynthesis; 1-deoxy-D-xylulose 5-phosphate biosynthesis; 1-deoxy-D-xylulose 5-phosphate from D-glyceraldehyde 3-phosphate and pyruvate: step 1/1. Catalyzes the acyloin condensation reaction between C atoms 2 and 3 of pyruvate and glyceraldehyde 3-phosphate to yield 1-deoxy-D-xylulose-5-phosphate (DXP). The protein is 1-deoxy-D-xylulose-5-phosphate synthase of Cyanothece sp. (strain PCC 7425 / ATCC 29141).